We begin with the raw amino-acid sequence, 422 residues long: Histidine--tRNA ligase (422 aa).

The protein belongs to the class-II aminoacyl-tRNA synthetase family. Homodimer.

It localises to the cytoplasm. It carries out the reaction tRNA(His) + L-histidine + ATP = L-histidyl-tRNA(His) + AMP + diphosphate + H(+). The polypeptide is Histidine--tRNA ligase (hisS) (Photobacterium profundum (strain SS9)).